Consider the following 388-residue polypeptide: Chorismate synthase (388 aa).

The NADP(+) site is built by R39 and R45. FMN contacts are provided by residues 130–132 (RSS), 251–252 (NA), G296, 311–315 (KPIPT), and R337.

The protein belongs to the chorismate synthase family. Homotetramer. It depends on FMNH2 as a cofactor.

It carries out the reaction 5-O-(1-carboxyvinyl)-3-phosphoshikimate = chorismate + phosphate. It participates in metabolic intermediate biosynthesis; chorismate biosynthesis; chorismate from D-erythrose 4-phosphate and phosphoenolpyruvate: step 7/7. Its function is as follows. Catalyzes the anti-1,4-elimination of the C-3 phosphate and the C-6 proR hydrogen from 5-enolpyruvylshikimate-3-phosphate (EPSP) to yield chorismate, which is the branch point compound that serves as the starting substrate for the three terminal pathways of aromatic amino acid biosynthesis. This reaction introduces a second double bond into the aromatic ring system. This chain is Chorismate synthase, found in Streptococcus pyogenes serotype M2 (strain MGAS10270).